Reading from the N-terminus, the 584-residue chain is Delta 8-(E)-sphingolipid desaturase (584 aa).

The Cytochrome b5 heme-binding domain occupies K7–E82. H42 and H65 together coordinate heme. The disordered stretch occupies residues N109 to E134. Residues L261–M281 traverse the membrane as a helical segment. Residues H293–H297 carry the Histidine box-1 motif. Residues I306 to W326 traverse the membrane as a helical segment. The short motif at H330 to H334 is the Histidine box-2 element. Transmembrane regions (helical) follow at residues Y386–S403, Y423–K443, and V455–A475. Positions Q514–H518 match the Histidine box-3 motif.

It belongs to the fatty acid desaturase type 1 family.

Its subcellular location is the membrane. The catalysed reaction is an N-acylsphing-4-enine + 2 Fe(II)-[cytochrome b5] + O2 + 2 H(+) = a (4E,8E)-4-sphinga-4,8-dienine ceramide + 2 Fe(III)-[cytochrome b5] + 2 H2O. It functions in the pathway lipid metabolism; sphingolipid metabolism. Functionally, delta(8)-fatty-acid desaturase which introduces a double bond at the 8-position in the long-chain base (LCB) of ceramides. Required for the formation of the di-unsaturated sphingoid base (E,E)-sphinga-4,8-dienine during glucosylceramide (GluCer) biosynthesis. The polypeptide is Delta 8-(E)-sphingolipid desaturase (Candida albicans (strain SC5314 / ATCC MYA-2876) (Yeast)).